We begin with the raw amino-acid sequence, 292 residues long: Protein rogdi homolog (292 aa).

The span at 1-12 (MEVQSLTITTNY) shows a compositional bias: polar residues. The segment at 1-25 (MEVQSLTITTNYPPKPASPNPQDIR) is disordered.

The protein belongs to the rogdi family.

It is found in the nucleus envelope. This is Protein rogdi homolog from Caenorhabditis elegans.